Here is a 750-residue protein sequence, read N- to C-terminus: Polyribonucleotide nucleotidyltransferase (750 aa).

2 residues coordinate Mg(2+): Asp-492 and Asp-498. Positions 559–618 constitute a KH domain; that stretch reads PQLSVVEVNPEIIRVIIGPGGKNIKAITSATGASIDIEDSGRISIFAPTKESMDMAREMV. The S1 motif domain occupies 628–695; that stretch reads GKNYTAKVRK…NDGRVRASRK (68 aa). Residues 705–750 form a disordered region; it reads EWDPADTARPPRKPRDRDDRGDRGGRGDRGDRGGRNGRGGDRRDRR. Positions 717 to 750 are enriched in basic and acidic residues; sequence KPRDRDDRGDRGGRGDRGDRGGRNGRGGDRRDRR.

Belongs to the polyribonucleotide nucleotidyltransferase family. It depends on Mg(2+) as a cofactor.

It localises to the cytoplasm. The enzyme catalyses RNA(n+1) + phosphate = RNA(n) + a ribonucleoside 5'-diphosphate. In terms of biological role, involved in mRNA degradation. Catalyzes the phosphorolysis of single-stranded polyribonucleotides processively in the 3'- to 5'-direction. The protein is Polyribonucleotide nucleotidyltransferase of Oleidesulfovibrio alaskensis (strain ATCC BAA-1058 / DSM 17464 / G20) (Desulfovibrio alaskensis).